The sequence spans 645 residues: ATP-dependent DNA helicase Rep (645 aa).

The region spanning 1-280 is the UvrD-like helicase ATP-binding domain; sequence MSLNFSQKNA…IKMEHNYRSS (280 aa). Residues 22 to 29 and arginine 278 each bind ATP; that span reads AGAGSGKT. A UvrD-like helicase C-terminal domain is found at 281–562; sequence GRILKAANSL…QLMTLHASKG (282 aa).

The protein belongs to the helicase family. UvrD subfamily. As to quaternary structure, homodimer.

The catalysed reaction is Couples ATP hydrolysis with the unwinding of duplex DNA by translocating in the 3'-5' direction.. It catalyses the reaction ATP + H2O = ADP + phosphate + H(+). Functionally, rep helicase is a single-stranded DNA-dependent ATPase involved in DNA replication; it can initiate unwinding at a nick in the DNA. It binds to the single-stranded DNA and acts in a progressive fashion along the DNA in the 3' to 5' direction. The chain is ATP-dependent DNA helicase Rep from Buchnera aphidicola subsp. Acyrthosiphon pisum (strain APS) (Acyrthosiphon pisum symbiotic bacterium).